Reading from the N-terminus, the 112-residue chain is Putative galactitol utilization operon repressor (112 aa).

An HTH deoR-type domain is found at 5–60; sequence SFERRNKIIQLVNEQGTVLVQDLAGVFAASEATIRADLRFLEQKGVVTRFHGGAAK. Positions 22 to 41 form a DNA-binding region, H-T-H motif; it reads VLVQDLAGVFAASEATIRAD.

Its function is as follows. Repressor of the gat operon for galacticol transport and metabolism. In K12 strains the operon is constitutively expressed because this gene is inactive. In Escherichia coli (strain K12), this protein is Putative galactitol utilization operon repressor (gatR).